The sequence spans 595 residues: MAPEIHMTGPMCLIENTNGELVANPEALKILSAITQPVVVVAIVGLYRTGKSYLMNKLAGKNKGFSLGSTVKSHTKGIWMWCVPHPKKPEHTLVLLDTEGLGDVKKGDNQNDSWIFTLAVLLSSTLVYNSMGTINQQAMDQLYYVTELTHRIRSKSSPDENENEDSADFVSFFPDFVWTLRDFSLDLEADGQPLTPDEYLEYSLKLTQGTSQKDKNFNLPRLCIRKFFPKKKCFVFDLPIHRRKLAQLEKLQDEELDPEFVQQVADFCSYIFSNSKTKTLSGGIKVNGPRLESLVLTYINAISRGDLPCMENAVLALAQIENSAAVQKAIAHYDQQMGQKVQLPAETLQELLDLHRVSEREATEVYMKNSFKDVDHLFQKKLAAQLDKKRDDFCKQNQEASSDRCSALLQVIFSPLEEEVKAGIYSKPGGYCLFIQKLQDLEKKYYEEPRKGIQAEEILQTYLKSKESVTDAILQTDQILTEKEKEIEVECVKAESAQASAKMVEEMQIKYQQMMEEKEKSYQEHVKQLTEKMERERAQLLEEQEKTLTSKLQEQARVLKERCQGESTQLQNEIQKLQKTLKKKTKRYMSHKLKI.

The interval 1–309 is GTPase domain (Globular); that stretch reads MAPEIHMTGP…NAISRGDLPC (309 aa). The GB1/RHD3-type G domain maps to 35–276; the sequence is TQPVVVVAIV…FCSYIFSNSK (242 aa). Residues 45 to 52, 67 to 69, and 97 to 101 contribute to the GTP site; these read GLYRTGKS, LGS, and DTEGL. The stretch at 482–595 forms a coiled coil; the sequence is EKEKEIEVEC…KRYMSHKLKI (114 aa).

The protein belongs to the TRAFAC class dynamin-like GTPase superfamily. GB1/RHD3 GTPase family. GB1 subfamily. Heterodimer with other family members, including GBP1, GBP2 and GBP5. Dimerization regulates subcellular location.

It is found in the cytoplasm. The protein resides in the perinuclear region. Its subcellular location is the golgi apparatus membrane. The catalysed reaction is GTP + H2O = GDP + phosphate + H(+). In terms of biological role, interferon (IFN)-inducible GTPase that plays important roles in innate immunity against a diverse range of bacterial, viral and protozoan pathogens. Hydrolyzes GTP very efficiently; GDP rather than GMP is the major reaction product. Following infection, recruited to the pathogen-containing vacuoles or vacuole-escaped bacteria and acts as a positive regulator of inflammasome assembly by promoting the release of inflammasome ligands from bacteria. Acts by promoting lysis of pathogen-containing vacuoles, releasing pathogens into the cytosol. Following pathogen release in the cytosol, promotes recruitment of proteins that mediate bacterial cytolysis: this liberates ligands that are detected by inflammasomes, such as lipopolysaccharide (LPS) that activates the non-canonical CASP4/CASP11 inflammasome or double-stranded DNA (dsDNA) that activates the AIM2 inflammasome. Exhibits antiviral activity against influenza virus. Its function is as follows. Shows the most prominent antiviral activity in epithelial cells. The protein is Guanylate-binding protein 3 (GBP3) of Homo sapiens (Human).